The following is a 493-amino-acid chain: GTPase Der (493 aa).

The EngA-type G 1 domain occupies 3 to 166 (PVIALVGRPN…EALGIFPKDN (164 aa)). GTP-binding positions include 9–16 (GRPNVGKS), 56–60 (DTGGI), and 118–121 (NKVD). The tract at residues 166 to 195 (NAEEEGEGEPASEEVAEGEEPTRIPGPSEK) is disordered. Residues 167 to 184 (AEEEGEGEPASEEVAEGE) are compositionally biased toward acidic residues. Residues 198-371 (IKIAIIGRPN…SVQESFRSAV (174 aa)) form the EngA-type G 2 domain. GTP-binding positions include 204–211 (GRPNVGKS), 251–255 (DTAGV), and 316–319 (NKWD). Residues 372-456 (TRWPTSRLTS…PIRIEYKGGE (85 aa)) form the KH-like domain. Basic and acidic residues predominate over residues 454–463 (GGENPYEGKK). Positions 454 to 493 (GGENPYEGKKNSLTARQVNKKRRLMSHHKKAEKKKKDKRR) are disordered. Over residues 471 to 493 (VNKKRRLMSHHKKAEKKKKDKRR) the composition is skewed to basic residues.

This sequence belongs to the TRAFAC class TrmE-Era-EngA-EngB-Septin-like GTPase superfamily. EngA (Der) GTPase family. As to quaternary structure, associates with the 50S ribosomal subunit.

Functionally, GTPase that plays an essential role in the late steps of ribosome biogenesis. The sequence is that of GTPase Der from Pseudomonas aeruginosa (strain UCBPP-PA14).